We begin with the raw amino-acid sequence, 274 residues long: Orotidine 5'-phosphate decarboxylase (274 aa).

Low complexity predominate over residues 1–15; sequence MSAGRRSSGGRSAAA. Positions 1-21 are disordered; that stretch reads MSAGRRSSGGRSAAAPRFTPP. Substrate-binding positions include Asp32, Lys54, 99-108, Thr154, Arg215, Gln224, Gly244, and Arg245; that span reads DLKLHDIPAT. Lys101 acts as the Proton donor in catalysis.

Belongs to the OMP decarboxylase family. Type 1 subfamily. In terms of assembly, homodimer.

The catalysed reaction is orotidine 5'-phosphate + H(+) = UMP + CO2. Its pathway is pyrimidine metabolism; UMP biosynthesis via de novo pathway; UMP from orotate: step 2/2. Its function is as follows. Catalyzes the decarboxylation of orotidine 5'-monophosphate (OMP) to uridine 5'-monophosphate (UMP). This chain is Orotidine 5'-phosphate decarboxylase, found in Frankia casuarinae (strain DSM 45818 / CECT 9043 / HFP020203 / CcI3).